The primary structure comprises 266 residues: Thiazole synthase (266 aa).

K95 serves as the catalytic Schiff-base intermediate with DXP. 1-deoxy-D-xylulose 5-phosphate-binding positions include G156, 182-183 (AG), and 204-205 (NT).

This sequence belongs to the ThiG family. As to quaternary structure, homotetramer. Forms heterodimers with either ThiH or ThiS.

It localises to the cytoplasm. The catalysed reaction is [ThiS sulfur-carrier protein]-C-terminal-Gly-aminoethanethioate + 2-iminoacetate + 1-deoxy-D-xylulose 5-phosphate = [ThiS sulfur-carrier protein]-C-terminal Gly-Gly + 2-[(2R,5Z)-2-carboxy-4-methylthiazol-5(2H)-ylidene]ethyl phosphate + 2 H2O + H(+). The protein operates within cofactor biosynthesis; thiamine diphosphate biosynthesis. Its function is as follows. Catalyzes the rearrangement of 1-deoxy-D-xylulose 5-phosphate (DXP) to produce the thiazole phosphate moiety of thiamine. Sulfur is provided by the thiocarboxylate moiety of the carrier protein ThiS. In vitro, sulfur can be provided by H(2)S. The chain is Thiazole synthase from Shewanella denitrificans (strain OS217 / ATCC BAA-1090 / DSM 15013).